Here is a 301-residue protein sequence, read N- to C-terminus: Cilia- and flagella-associated protein 161 (301 aa).

The protein localises to the cytoplasm. It localises to the cytoskeleton. It is found in the cilium axoneme. In terms of biological role, microtubule inner protein (MIP) part of the dynein-decorated doublet microtubules (DMTs) in cilia axoneme, which is required for motile cilia beating. The protein is Cilia- and flagella-associated protein 161 of Danio rerio (Zebrafish).